The following is a 73-amino-acid chain: MMSKLRVLLTICLLLFPLSALPLDGDQPADQPAKRMWNGKLAARKPRFDKYDLVRGCCPPQWCGPDCTSPCCG.

The N-terminal stretch at 1-20 (MMSKLRVLLTICLLLFPLSA) is a signal peptide. Residues 21–55 (LPLDGDQPADQPAKRMWNGKLAARKPRFDKYDLVR) constitute a propeptide that is removed on maturation. A 4-hydroxyproline mark is found at Pro59, Pro60, Pro65, and Pro70. At Cys72 the chain carries Cysteine amide.

In terms of processing, contains 3 disulfide bonds. In terms of tissue distribution, expressed by the venom duct.

The protein localises to the secreted. This Conus regius (Crown cone) protein is Conotoxin reg3a.